The sequence spans 338 residues: Protein mono-ADP-ribosyltransferase PARP11 (338 aa).

ADP-ribosyl glutamic acid is present on Glu13. Lys18 is modified (N6-(ADP-ribosyl)lysine). The WWE domain maps to 22-106 (NEVDDMDTSD…TTGKQRLIKR (85 aa)). An ADP-ribosylcysteine mark is found at Cys56 and Cys72. Asp87 carries the ADP-ribosyl aspartic acid modification. The PARP catalytic domain occupies 123 to 338 (IPMPPHWENV…IYPEYLIDFH (216 aa)).

Belongs to the ARTD/PARP family. As to quaternary structure, interacts with PARP12; this interaction plays a role in zika virus suppression. In terms of processing, auto-mono-ADP-ribosylated.

It localises to the nucleus. The protein localises to the nuclear pore complex. It carries out the reaction L-aspartyl-[protein] + NAD(+) = 4-O-(ADP-D-ribosyl)-L-aspartyl-[protein] + nicotinamide. It catalyses the reaction L-cysteinyl-[protein] + NAD(+) = S-(ADP-D-ribosyl)-L-cysteinyl-[protein] + nicotinamide + H(+). The catalysed reaction is L-glutamyl-[protein] + NAD(+) = 5-O-(ADP-D-ribosyl)-L-glutamyl-[protein] + nicotinamide. The enzyme catalyses L-lysyl-[protein] + NAD(+) = N(6)-(ADP-D-ribosyl)-L-lysyl-[protein] + nicotinamide + H(+). Its function is as follows. Mono-ADP-ribosyltransferase that mediates mono-ADP-ribosylation of target proteins. Plays a role in nuclear envelope stability and nuclear remodeling during spermiogenesis. Inhibits the type I interferon activated signaling pathway. Mechanistically, mono-ADP-ribosylates beta-TrCP/BTRC to promote IFNAR1 ubiquitination and protect BTRC from ubiquitin-proteasome degradation. Additionally, acts as an antiviral factor by cooperating with PARP12 to suppress Zika virus replication, independent of IFNAR1 regulation or intrinsic PARP enzymatic activity. Instead, facilitates the degradation of viral NS1 and NS3 proteins, potentially disrupting viral replication. The sequence is that of Protein mono-ADP-ribosyltransferase PARP11 from Homo sapiens (Human).